Here is a 319-residue protein sequence, read N- to C-terminus: Acetyl-coenzyme A carboxylase carboxyl transferase subunit alpha (319 aa).

The CoA carboxyltransferase C-terminal domain maps to 35-296; it reads NIDEEVHRLR…KAQLLADLAD (262 aa).

The protein belongs to the AccA family. As to quaternary structure, acetyl-CoA carboxylase is a heterohexamer composed of biotin carboxyl carrier protein (AccB), biotin carboxylase (AccC) and two subunits each of ACCase subunit alpha (AccA) and ACCase subunit beta (AccD).

Its subcellular location is the cytoplasm. It carries out the reaction N(6)-carboxybiotinyl-L-lysyl-[protein] + acetyl-CoA = N(6)-biotinyl-L-lysyl-[protein] + malonyl-CoA. The protein operates within lipid metabolism; malonyl-CoA biosynthesis; malonyl-CoA from acetyl-CoA: step 1/1. Its function is as follows. Component of the acetyl coenzyme A carboxylase (ACC) complex. First, biotin carboxylase catalyzes the carboxylation of biotin on its carrier protein (BCCP) and then the CO(2) group is transferred by the carboxyltransferase to acetyl-CoA to form malonyl-CoA. The sequence is that of Acetyl-coenzyme A carboxylase carboxyl transferase subunit alpha from Citrobacter koseri (strain ATCC BAA-895 / CDC 4225-83 / SGSC4696).